The chain runs to 171 residues: Large ribosomal subunit protein uL10 (171 aa).

This sequence belongs to the universal ribosomal protein uL10 family. As to quaternary structure, part of the ribosomal stalk of the 50S ribosomal subunit. The N-terminus interacts with L11 and the large rRNA to form the base of the stalk. The C-terminus forms an elongated spine to which L12 dimers bind in a sequential fashion forming a multimeric L10(L12)X complex.

Its function is as follows. Forms part of the ribosomal stalk, playing a central role in the interaction of the ribosome with GTP-bound translation factors. The sequence is that of Large ribosomal subunit protein uL10 from Maricaulis maris (strain MCS10) (Caulobacter maris).